The primary structure comprises 830 residues: Beta-glucosidase A (830 aa).

Residue aspartate 769 is part of the active site.

The protein belongs to the glycosyl hydrolase 3 family.

It catalyses the reaction Hydrolysis of terminal, non-reducing beta-D-glucosyl residues with release of beta-D-glucose.. In terms of biological role, b.fibrisolvens beta-glucosidase hydrolyzes cellobiose to a limited extent, cellotriose to cellobiose and glucose, and cellotetraose and cellopentaose to predominantly glucose. The polypeptide is Beta-glucosidase A (bglA) (Butyrivibrio fibrisolvens).